A 241-amino-acid chain; its full sequence is Proteasome subunit beta type-6 (241 aa).

The propeptide occupies Met-1–His-19.

The protein belongs to the peptidase T1B family. In terms of assembly, the 26S proteasome consists of a 20S proteasome core and two 19S regulatory subunits. The 20S proteasome core is composed of 28 subunits that are arranged in four stacked rings, resulting in a barrel-shaped structure. The two end rings are each formed by seven alpha subunits, and the two central rings are each formed by seven beta subunits. The catalytic chamber with the active sites is on the inside of the barrel.

The protein resides in the cytoplasm. It is found in the nucleus. In terms of biological role, non-catalytic component of the proteasome which degrades poly-ubiquitinated proteins in the cytoplasm and in the nucleus. It is essential for the regulated turnover of proteins and for the removal of misfolded proteins. The proteasome is a multicatalytic proteinase complex that is characterized by its ability to cleave peptides with Arg, Phe, Tyr, Leu, and Glu adjacent to the leaving group at neutral or slightly basic pH. It has an ATP-dependent proteolytic activity. This chain is Proteasome subunit beta type-6 (PRE7), found in Saccharomyces cerevisiae (strain ATCC 204508 / S288c) (Baker's yeast).